A 220-amino-acid polypeptide reads, in one-letter code: Large ribosomal subunit protein uL3 (220 aa).

Residues 61-81 are disordered; it reads KGSKSNKYANKPAEGHAKKAD.

This sequence belongs to the universal ribosomal protein uL3 family. As to quaternary structure, part of the 50S ribosomal subunit. Forms a cluster with proteins L14 and L19.

In terms of biological role, one of the primary rRNA binding proteins, it binds directly near the 3'-end of the 23S rRNA, where it nucleates assembly of the 50S subunit. This Staphylococcus epidermidis (strain ATCC 35984 / DSM 28319 / BCRC 17069 / CCUG 31568 / BM 3577 / RP62A) protein is Large ribosomal subunit protein uL3.